Consider the following 230-residue polypeptide: ATP synthase subunit a (230 aa).

Helical transmembrane passes span 26 to 46 (ANAV…SLIA), 83 to 103 (FFPL…VGLI), 112 to 132 (NVNT…VVGI), 143 to 163 (FMGP…IGHL), 182 to 202 (LVLM…MMLM), and 203 to 223 (GVLV…IYIQ).

It belongs to the ATPase A chain family. In terms of assembly, F-type ATPases have 2 components, CF(1) - the catalytic core - and CF(0) - the membrane proton channel. CF(1) has five subunits: alpha(3), beta(3), gamma(1), delta(1), epsilon(1). CF(0) has three main subunits: a(1), b(2) and c(9-12). The alpha and beta chains form an alternating ring which encloses part of the gamma chain. CF(1) is attached to CF(0) by a central stalk formed by the gamma and epsilon chains, while a peripheral stalk is formed by the delta and b chains.

The protein localises to the cell inner membrane. In terms of biological role, key component of the proton channel; it plays a direct role in the translocation of protons across the membrane. In Trichlorobacter lovleyi (strain ATCC BAA-1151 / DSM 17278 / SZ) (Geobacter lovleyi), this protein is ATP synthase subunit a.